The sequence spans 318 residues: HPr kinase/phosphorylase (318 aa).

Active-site residues include H143 and K164. 158-165 contacts ATP; that stretch reads GKSGVGKS. Position 165 (S165) interacts with Mg(2+). Catalysis depends on D182, which acts as the Proton acceptor; for phosphorylation activity. Proton donor; for dephosphorylation activity. Residues 206 to 215 form an important for the catalytic mechanism of both phosphorylation and dephosphorylation region; that stretch reads MEIRGLGILN. A Mg(2+)-binding site is contributed by E207. The active site involves R248. The tract at residues 269–274 is important for the catalytic mechanism of dephosphorylation; sequence PVKPGR.

The protein belongs to the HPrK/P family. As to quaternary structure, homohexamer. Mg(2+) serves as cofactor.

It catalyses the reaction [HPr protein]-L-serine + ATP = [HPr protein]-O-phospho-L-serine + ADP + H(+). It carries out the reaction [HPr protein]-O-phospho-L-serine + phosphate + H(+) = [HPr protein]-L-serine + diphosphate. In terms of biological role, catalyzes the ATP- as well as the pyrophosphate-dependent phosphorylation of a specific serine residue in HPr, a phosphocarrier protein of the phosphoenolpyruvate-dependent sugar phosphotransferase system (PTS). HprK/P also catalyzes the pyrophosphate-producing, inorganic phosphate-dependent dephosphorylation (phosphorolysis) of seryl-phosphorylated HPr (P-Ser-HPr). This chain is HPr kinase/phosphorylase, found in Leptospira borgpetersenii serovar Hardjo-bovis (strain L550).